The chain runs to 379 residues: Cytochrome b (379 aa).

4 helical membrane-spanning segments follow: residues 33–53 (FGSL…FLAM), 77–98 (WTIR…FIHV), 113–133 (WNVG…GYVL), and 178–198 (FFAL…IHLL). 2 residues coordinate heme b: His83 and His97. Positions 182 and 196 each coordinate heme b. Residue His201 coordinates a ubiquinone. Helical transmembrane passes span 226–246 (TKDF…ALFY), 288–308 (LGGV…PFLQ), 320–340 (LSQF…WIGG), and 347–367 (FINI…FIMP).

The protein belongs to the cytochrome b family. In terms of assembly, the cytochrome bc1 complex contains 11 subunits: 3 respiratory subunits (MT-CYB, CYC1 and UQCRFS1), 2 core proteins (UQCRC1 and UQCRC2) and 6 low-molecular weight proteins (UQCRH/QCR6, UQCRB/QCR7, UQCRQ/QCR8, UQCR10/QCR9, UQCR11/QCR10 and a cleavage product of UQCRFS1). This cytochrome bc1 complex then forms a dimer. The cofactor is heme b.

It is found in the mitochondrion inner membrane. Component of the ubiquinol-cytochrome c reductase complex (complex III or cytochrome b-c1 complex) that is part of the mitochondrial respiratory chain. The b-c1 complex mediates electron transfer from ubiquinol to cytochrome c. Contributes to the generation of a proton gradient across the mitochondrial membrane that is then used for ATP synthesis. The sequence is that of Cytochrome b (MT-CYB) from Lepilemur sahamalazensis (Sahamalaza sportive lemur).